Consider the following 557-residue polypeptide: MASDLDIARASRLRPIGEIAAAAGIPAEALIPYGRYKGKVDGGFIRSLEDRPDGALVLVVGISPTPAGEGKTTTSIGLGDALRAAGAKAMIALREPSLGPCFGQKGGATGGGRAQVAPMEEINLHFTGDFHAITSANNLLAAMLDNHVYWGNELGIDPRRIAFRRAIDMNDRALRQTVLGLGDGANGAAREQKFDITVASEVMAIFCLARDLDDLQRRLARIVVAERRDGSPVTPADLKAVGAMAALLRDALQPNLVQTLEGTPALVHGGPFANIAHGCNSVIATRTALKLADIVVTEAGFGADLGGEKFLDIKCRQAGLAPSCAVVVATIRALKMHAGVAKADLGAENPGAVARGAANLRRHVAAMRAFGLPVIVAINGFVTDTGAEREALRAALDEDGGARICFCTHWADGSAGATDLAQAVIETIAAKSARFAPLYPDDMKLPHKLRTIAQRIYGADDIELSPLAAKRLARFEAQGYDHLPVCVAKTQYSFTADPARRGAPTGFTVPIRDARLSAGAGFVVALAGDVMTMPGLPRIPAAEAIGLDPDGAIHGLF.

Threonine 65–threonine 72 is a binding site for ATP.

Belongs to the formate--tetrahydrofolate ligase family.

It carries out the reaction (6S)-5,6,7,8-tetrahydrofolate + formate + ATP = (6R)-10-formyltetrahydrofolate + ADP + phosphate. Its pathway is one-carbon metabolism; tetrahydrofolate interconversion. This chain is Formate--tetrahydrofolate ligase, found in Acidiphilium cryptum (strain JF-5).